The following is a 364-amino-acid chain: Coproporphyrin III ferrochelatase (364 aa).

The Fe-coproporphyrin III site is built by arginine 29 and tyrosine 118. Fe(2+) contacts are provided by histidine 169 and glutamate 250.

The protein belongs to the ferrochelatase family.

The protein resides in the cytoplasm. The catalysed reaction is Fe-coproporphyrin III + 2 H(+) = coproporphyrin III + Fe(2+). It functions in the pathway porphyrin-containing compound metabolism; protoheme biosynthesis. Involved in coproporphyrin-dependent heme b biosynthesis. Catalyzes the insertion of ferrous iron into coproporphyrin III to form Fe-coproporphyrin III. The protein is Coproporphyrin III ferrochelatase of Streptococcus pneumoniae (strain Hungary19A-6).